A 358-amino-acid polypeptide reads, in one-letter code: Probable tartrate dehydrogenase/decarboxylase TtuC' (358 aa).

Mn(2+)-binding residues include aspartate 222, aspartate 246, and aspartate 250.

The protein belongs to the isocitrate and isopropylmalate dehydrogenases family. Mg(2+) serves as cofactor. It depends on Mn(2+) as a cofactor. K(+) is required as a cofactor.

The protein localises to the cytoplasm. It catalyses the reaction tartrate + NAD(+) = 2-hydroxy-3-oxosuccinate + NADH + H(+). The catalysed reaction is (2R,3S)-tartrate + NAD(+) = 2-hydroxy-3-oxosuccinate + NADH + H(+). The enzyme catalyses (2R,3R)-tartrate + NAD(+) = 2-hydroxy-3-oxosuccinate + NADH + H(+). It carries out the reaction (2R,3R)-tartrate + H(+) = (R)-glycerate + CO2. It catalyses the reaction (R)-malate + NAD(+) = pyruvate + CO2 + NADH. It functions in the pathway carbohydrate acid metabolism; tartrate degradation; 2-hydroxy-3-oxosuccinate from L-tartrate: step 1/1. Its pathway is carbohydrate acid metabolism; tartrate degradation; 2-hydroxy-3-oxosuccinate from meso-tartrate: step 1/1. The protein operates within carbohydrate acid metabolism; tartrate degradation; D-glycerate from L-tartrate: step 1/1. Its function is as follows. Has multiple catalytic activities. Apart from catalyzing the oxidation of (+)-tartrate to oxaloglycolate, also converts meso-tartrate to D-glycerate and catalyzes the oxidative decarboxylation of D-malate to pyruvate. In Agrobacterium vitis (Rhizobium vitis), this protein is Probable tartrate dehydrogenase/decarboxylase TtuC' (ttuC').